A 932-amino-acid polypeptide reads, in one-letter code: DNA mismatch repair protein MutS (932 aa).

620–627 serves as a coordination point for ATP; the sequence is GPNMAGKS.

This sequence belongs to the DNA mismatch repair MutS family.

In terms of biological role, this protein is involved in the repair of mismatches in DNA. It is possible that it carries out the mismatch recognition step. This protein has a weak ATPase activity. This chain is DNA mismatch repair protein MutS, found in Lachnoclostridium phytofermentans (strain ATCC 700394 / DSM 18823 / ISDg) (Clostridium phytofermentans).